Here is a 290-residue protein sequence, read N- to C-terminus: Nucleotide-binding protein Xfasm12_0753 (290 aa).

13–20 contacts ATP; that stretch reads GLSGSGKS. Residue 65–68 coordinates GTP; the sequence is DIRS.

The protein belongs to the RapZ-like family.

Displays ATPase and GTPase activities. This Xylella fastidiosa (strain M12) protein is Nucleotide-binding protein Xfasm12_0753.